A 130-amino-acid chain; its full sequence is Small ribosomal subunit protein uS9 (130 aa).

Belongs to the universal ribosomal protein uS9 family.

This Shewanella sediminis (strain HAW-EB3) protein is Small ribosomal subunit protein uS9.